Consider the following 396-residue polypeptide: Elongation factor Tu (396 aa).

The 197-residue stretch at 10–206 (KPHVNVGTIG…ALDTYIPTPE (197 aa)) folds into the tr-type G domain. The tract at residues 19–26 (GHVDHGKT) is G1. Residue 19–26 (GHVDHGKT) participates in GTP binding. Thr26 serves as a coordination point for Mg(2+). The interval 60 to 64 (GITIN) is G2. The segment at 81 to 84 (DCPG) is G3. Residues 81–85 (DCPGH) and 136–139 (NKCD) contribute to the GTP site. A G4 region spans residues 136-139 (NKCD). The G5 stretch occupies residues 174–176 (SAK).

Belongs to the TRAFAC class translation factor GTPase superfamily. Classic translation factor GTPase family. EF-Tu/EF-1A subfamily. Monomer.

The protein localises to the cytoplasm. The enzyme catalyses GTP + H2O = GDP + phosphate + H(+). GTP hydrolase that promotes the GTP-dependent binding of aminoacyl-tRNA to the A-site of ribosomes during protein biosynthesis. This is Elongation factor Tu from Burkholderia cenocepacia (strain HI2424).